The sequence spans 1047 residues: FACT complex subunit SPT16 (1047 aa).

A2 carries the N-acetylalanine modification. N6-acetyllysine is present on K139. S188 is subject to Phosphoserine. An N6-acetyllysine mark is found at K196 and K223. S455 carries the post-translational modification Phosphoserine. Positions 465 to 507 (RNEMTAEEKRRAHQKELAAQLNEEAKRRLTEQKGEQQIQKARK) form a coiled coil. Residues 491-518 (RRLTEQKGEQQIQKARKSNVSYKNPSLM) form a disordered region. K497 participates in a covalent cross-link: Glycyl lysine isopeptide (Lys-Gly) (interchain with G-Cter in SUMO2). Positions 499–514 (EQQIQKARKSNVSYKN) are enriched in polar residues. S508 bears the Phosphoserine mark. Position 513 is an N6-acetyllysine; alternate (K513). K513 participates in a covalent cross-link: Glycyl lysine isopeptide (Lys-Gly) (interchain with G-Cter in SUMO2); alternate. K647 is covalently cross-linked (Glycyl lysine isopeptide (Lys-Gly) (interchain with G-Cter in SUMO2)). 2 positions are modified to phosphoserine: S650 and S658. 2 positions are modified to N6-acetyllysine: K732 and K786. Phosphothreonine is present on T903. K904 is subject to N6-acetyllysine. The tract at residues 918 to 1047 (EQGGWSFLEP…SSAPPKKKRK (130 aa)) is disordered. Residues 927–973 (PEGEGSDAEDGDSESEIEDETFNPSEDDYEEEEEDSDEDYSSEAEES) show a composition bias toward acidic residues. 4 positions are modified to phosphoserine: S979, S982, S986, and S1015. The segment covering 985-1005 (ESGKDWDELEEEARKADRESR) has biased composition (basic and acidic residues). The segment covering 1024–1039 (VHSSGRGSNRGSRHSS) has biased composition (low complexity).

This sequence belongs to the peptidase M24 family. SPT16 subfamily. In terms of assembly, interacts with MYOG (via C-terminal region). Component of the FACT complex, a stable heterodimer of SSRP1 and SUPT16H. Also a component of a CK2-SPT16-SSRP1 complex which forms following UV irradiation, composed of SSRP1, SUPT16H, CSNK2A1, CSNK2A2 and CSNK2B. Interacts with NEK9. Binds to histone H2A-H2B. Identified in a centromere complex containing histones H2A, H2B and H4, and at least CENPA, CENPB, CENPC, CENPT, CENPN, HJURP, SUPT16H, SSRP1 and RSF1. Interacts with GTF2E2. In terms of processing, ADP-ribosylated. ADP-ribosylation by PARP1 is induced by genotoxic stress and correlates with dissociation of FACT from chromatin. In terms of tissue distribution, widely expressed. Expressed in brain, liver, heart, kidneys, lungs, spleen, thymus, ovary, and testes, with highest levels of expression observed in thymus.

The protein resides in the nucleus. The protein localises to the chromosome. In terms of biological role, component of the FACT complex, a general chromatin factor that acts to reorganize nucleosomes. The FACT complex is involved in multiple processes that require DNA as a template such as mRNA elongation, DNA replication and DNA repair. During transcription elongation the FACT complex acts as a histone chaperone that both destabilizes and restores nucleosomal structure. It facilitates the passage of RNA polymerase II and transcription by promoting the dissociation of one histone H2A-H2B dimer from the nucleosome, then subsequently promotes the reestablishment of the nucleosome following the passage of RNA polymerase II. The FACT complex is probably also involved in phosphorylation of 'Ser-392' of p53/TP53 via its association with CK2 (casein kinase II). In Mus musculus (Mouse), this protein is FACT complex subunit SPT16 (Supt16h).